A 309-amino-acid chain; its full sequence is Homoserine kinase (309 aa).

Position 91 to 101 (91 to 101) interacts with ATP; that stretch reads PVGSGLGSSAC.

Belongs to the GHMP kinase family. Homoserine kinase subfamily.

It localises to the cytoplasm. It catalyses the reaction L-homoserine + ATP = O-phospho-L-homoserine + ADP + H(+). The protein operates within amino-acid biosynthesis; L-threonine biosynthesis; L-threonine from L-aspartate: step 4/5. Its function is as follows. Catalyzes the ATP-dependent phosphorylation of L-homoserine to L-homoserine phosphate. This is Homoserine kinase from Hamiltonella defensa subsp. Acyrthosiphon pisum (strain 5AT).